Reading from the N-terminus, the 227-residue chain is Ribose-5-phosphate isomerase A (227 aa).

Residues 26–29 (TGST), 82–85 (DGAD), and 95–98 (KGGG) contribute to the substrate site. Glu-104 (proton acceptor) is an active-site residue. Lys-122 contributes to the substrate binding site.

The protein belongs to the ribose 5-phosphate isomerase family. Homodimer.

It carries out the reaction aldehydo-D-ribose 5-phosphate = D-ribulose 5-phosphate. Its pathway is carbohydrate degradation; pentose phosphate pathway; D-ribose 5-phosphate from D-ribulose 5-phosphate (non-oxidative stage): step 1/1. Its function is as follows. Catalyzes the reversible conversion of ribose-5-phosphate to ribulose 5-phosphate. This Streptococcus pyogenes serotype M28 (strain MGAS6180) protein is Ribose-5-phosphate isomerase A.